We begin with the raw amino-acid sequence, 269 residues long: Ribosomal RNA small subunit methyltransferase A (269 aa).

S-adenosyl-L-methionine-binding residues include Asn11, Leu13, Gly37, Glu57, Asp85, and Asn104.

Belongs to the class I-like SAM-binding methyltransferase superfamily. rRNA adenine N(6)-methyltransferase family. RsmA subfamily.

It is found in the cytoplasm. It carries out the reaction adenosine(1518)/adenosine(1519) in 16S rRNA + 4 S-adenosyl-L-methionine = N(6)-dimethyladenosine(1518)/N(6)-dimethyladenosine(1519) in 16S rRNA + 4 S-adenosyl-L-homocysteine + 4 H(+). In terms of biological role, specifically dimethylates two adjacent adenosines (A1518 and A1519) in the loop of a conserved hairpin near the 3'-end of 16S rRNA in the 30S particle. May play a critical role in biogenesis of 30S subunits. The polypeptide is Ribosomal RNA small subunit methyltransferase A (Campylobacter hominis (strain ATCC BAA-381 / DSM 21671 / CCUG 45161 / LMG 19568 / NCTC 13146 / CH001A)).